The sequence spans 350 residues: Magnesium-chelatase 38 kDa subunit (350 aa).

Residue 52–59 (GDRGTGKS) coordinates ATP.

Belongs to the Mg-chelatase subunits D/I family.

The catalysed reaction is protoporphyrin IX + Mg(2+) + ATP + H2O = Mg-protoporphyrin IX + ADP + phosphate + 3 H(+). It functions in the pathway porphyrin-containing compound metabolism; bacteriochlorophyll biosynthesis. In terms of biological role, involved in bacteriochlorophyll biosynthesis; introduces a magnesium ion into protoporphyrin IX to yield Mg-protoporphyrin IX. The chain is Magnesium-chelatase 38 kDa subunit (bchI) from Rhodobacter capsulatus (strain ATCC BAA-309 / NBRC 16581 / SB1003).